Reading from the N-terminus, the 291-residue chain is ATP synthase gamma chain (291 aa).

This sequence belongs to the ATPase gamma chain family. F-type ATPases have 2 components, CF(1) - the catalytic core - and CF(0) - the membrane proton channel. CF(1) has five subunits: alpha(3), beta(3), gamma(1), delta(1), epsilon(1). CF(0) has three main subunits: a, b and c.

It is found in the cell inner membrane. Its function is as follows. Produces ATP from ADP in the presence of a proton gradient across the membrane. The gamma chain is believed to be important in regulating ATPase activity and the flow of protons through the CF(0) complex. This chain is ATP synthase gamma chain, found in Sphingopyxis alaskensis (strain DSM 13593 / LMG 18877 / RB2256) (Sphingomonas alaskensis).